We begin with the raw amino-acid sequence, 147 residues long: Hemoglobin subunit rho (147 aa).

In terms of domain architecture, Globin spans 3 to 147 (HWSAEEKQLI…VAHALAYKYH (145 aa)). His-64 and His-93 together coordinate heme b.

Belongs to the globin family.

Functionally, the rho chain is the major early embryonic beta-type hemoglobin chain. This Gallus gallus (Chicken) protein is Hemoglobin subunit rho.